Consider the following 67-residue polypeptide: ATP synthase F(0) complex subunit 8 (67 aa).

A helical membrane pass occupies residues 8–24; the sequence is TWLIMISSMILTLFITF. Lys-54 carries the post-translational modification N6-acetyllysine; alternate. Lys-54 is modified (N6-succinyllysine; alternate). Lys-57 is subject to N6-acetyllysine.

This sequence belongs to the ATPase protein 8 family. In terms of assembly, component of the ATP synthase complex composed at least of ATP5F1A/subunit alpha, ATP5F1B/subunit beta, ATP5MC1/subunit c (homooctomer), MT-ATP6/subunit a, MT-ATP8/subunit 8, ATP5ME/subunit e, ATP5MF/subunit f, ATP5MG/subunit g, ATP5MK/subunit k, ATP5MJ/subunit j, ATP5F1C/subunit gamma, ATP5F1D/subunit delta, ATP5F1E/subunit epsilon, ATP5PF/subunit F6, ATP5PB/subunit b, ATP5PD/subunit d, ATP5PO/subunit OSCP. ATP synthase complex consists of a soluble F(1) head domain (subunits alpha(3) and beta(3)) - the catalytic core - and a membrane F(0) domain - the membrane proton channel (subunits c, a, 8, e, f, g, k and j). These two domains are linked by a central stalk (subunits gamma, delta, and epsilon) rotating inside the F1 region and a stationary peripheral stalk (subunits F6, b, d, and OSCP). Interacts with PRICKLE3.

It is found in the mitochondrion membrane. Functionally, subunit 8, of the mitochondrial membrane ATP synthase complex (F(1)F(0) ATP synthase or Complex V) that produces ATP from ADP in the presence of a proton gradient across the membrane which is generated by electron transport complexes of the respiratory chain. ATP synthase complex consist of a soluble F(1) head domain - the catalytic core - and a membrane F(1) domain - the membrane proton channel. These two domains are linked by a central stalk rotating inside the F(1) region and a stationary peripheral stalk. During catalysis, ATP synthesis in the catalytic domain of F(1) is coupled via a rotary mechanism of the central stalk subunits to proton translocation. In vivo, can only synthesize ATP although its ATP hydrolase activity can be activated artificially in vitro. Part of the complex F(0) domain. This Halichoerus grypus (Gray seal) protein is ATP synthase F(0) complex subunit 8.